The primary structure comprises 341 residues: L-threonine 3-dehydrogenase (341 aa).

Cysteine 38 contacts Zn(2+). Active-site charge relay system residues include threonine 40 and histidine 43. Residues histidine 63, glutamate 64, cysteine 93, cysteine 96, cysteine 99, and cysteine 107 each contribute to the Zn(2+) site. NAD(+) contacts are provided by residues isoleucine 175, aspartate 195, arginine 200, 262-264 (LGI), and 286-287 (IY).

Belongs to the zinc-containing alcohol dehydrogenase family. As to quaternary structure, homotetramer. Zn(2+) is required as a cofactor.

It localises to the cytoplasm. The catalysed reaction is L-threonine + NAD(+) = (2S)-2-amino-3-oxobutanoate + NADH + H(+). It functions in the pathway amino-acid degradation; L-threonine degradation via oxydo-reductase pathway; glycine from L-threonine: step 1/2. Catalyzes the NAD(+)-dependent oxidation of L-threonine to 2-amino-3-ketobutyrate. The polypeptide is L-threonine 3-dehydrogenase (Shewanella putrefaciens (strain CN-32 / ATCC BAA-453)).